A 535-amino-acid polypeptide reads, in one-letter code: CTP synthase (535 aa).

Positions Met1–Leu267 are amidoligase domain. Ser13 serves as a coordination point for CTP. Ser13 is a binding site for UTP. Ser14–Ile19 serves as a coordination point for ATP. Tyr54 is an L-glutamine binding site. Asp71 serves as a coordination point for ATP. Positions 71 and 141 each coordinate Mg(2+). CTP-binding positions include Asp148–Glu150, Lys188–Gln193, and Lys224. Residues Lys188 to Gln193 and Lys224 each bind UTP. Arg240 to Ala242 contributes to the ATP binding site. The 243-residue stretch at Thr293 to Lys535 folds into the Glutamine amidotransferase type-1 domain. Residue Gly355 participates in L-glutamine binding. The active-site Nucleophile; for glutamine hydrolysis is Cys382. L-glutamine-binding positions include Leu383 to Gln386, Glu406, and Arg463. Active-site residues include His508 and Glu510.

Belongs to the CTP synthase family. Homotetramer.

The catalysed reaction is UTP + L-glutamine + ATP + H2O = CTP + L-glutamate + ADP + phosphate + 2 H(+). It carries out the reaction L-glutamine + H2O = L-glutamate + NH4(+). The enzyme catalyses UTP + NH4(+) + ATP = CTP + ADP + phosphate + 2 H(+). It participates in pyrimidine metabolism; CTP biosynthesis via de novo pathway; CTP from UDP: step 2/2. Its activity is regulated as follows. Allosterically activated by GTP, when glutamine is the substrate; GTP has no effect on the reaction when ammonia is the substrate. The allosteric effector GTP functions by stabilizing the protein conformation that binds the tetrahedral intermediate(s) formed during glutamine hydrolysis. Inhibited by the product CTP, via allosteric rather than competitive inhibition. Catalyzes the ATP-dependent amination of UTP to CTP with either L-glutamine or ammonia as the source of nitrogen. Regulates intracellular CTP levels through interactions with the four ribonucleotide triphosphates. This chain is CTP synthase, found in Staphylococcus haemolyticus (strain JCSC1435).